A 578-amino-acid polypeptide reads, in one-letter code: Proline--tRNA ligase (578 aa).

This sequence belongs to the class-II aminoacyl-tRNA synthetase family. ProS type 1 subfamily. As to quaternary structure, homodimer.

The protein resides in the cytoplasm. The catalysed reaction is tRNA(Pro) + L-proline + ATP = L-prolyl-tRNA(Pro) + AMP + diphosphate. Catalyzes the attachment of proline to tRNA(Pro) in a two-step reaction: proline is first activated by ATP to form Pro-AMP and then transferred to the acceptor end of tRNA(Pro). As ProRS can inadvertently accommodate and process non-cognate amino acids such as alanine and cysteine, to avoid such errors it has two additional distinct editing activities against alanine. One activity is designated as 'pretransfer' editing and involves the tRNA(Pro)-independent hydrolysis of activated Ala-AMP. The other activity is designated 'posttransfer' editing and involves deacylation of mischarged Ala-tRNA(Pro). The misacylated Cys-tRNA(Pro) is not edited by ProRS. This chain is Proline--tRNA ligase, found in Brachyspira hyodysenteriae (strain ATCC 49526 / WA1).